A 392-amino-acid polypeptide reads, in one-letter code: 1-deoxy-D-xylulose 5-phosphate reductoisomerase (392 aa).

NADPH-binding residues include Thr-10, Gly-11, Ser-12, Ile-13, Arg-37, Gln-38, and Asn-124. Position 125 (Lys-125) interacts with 1-deoxy-D-xylulose 5-phosphate. An NADPH-binding site is contributed by Glu-126. Asp-150 lines the Mn(2+) pocket. Residues Ser-151, Glu-152, Ser-179, and His-202 each contribute to the 1-deoxy-D-xylulose 5-phosphate site. Glu-152 lines the Mn(2+) pocket. Gly-208 is an NADPH binding site. Positions 215, 220, 221, and 224 each coordinate 1-deoxy-D-xylulose 5-phosphate. Glu-224 contributes to the Mn(2+) binding site.

It belongs to the DXR family. The cofactor is Mg(2+). It depends on Mn(2+) as a cofactor.

The enzyme catalyses 2-C-methyl-D-erythritol 4-phosphate + NADP(+) = 1-deoxy-D-xylulose 5-phosphate + NADPH + H(+). It participates in isoprenoid biosynthesis; isopentenyl diphosphate biosynthesis via DXP pathway; isopentenyl diphosphate from 1-deoxy-D-xylulose 5-phosphate: step 1/6. Functionally, catalyzes the NADPH-dependent rearrangement and reduction of 1-deoxy-D-xylulose-5-phosphate (DXP) to 2-C-methyl-D-erythritol 4-phosphate (MEP). The sequence is that of 1-deoxy-D-xylulose 5-phosphate reductoisomerase from Cupriavidus metallidurans (strain ATCC 43123 / DSM 2839 / NBRC 102507 / CH34) (Ralstonia metallidurans).